A 601-amino-acid chain; its full sequence is Group B oligopeptidase PepB (601 aa).

His-386 serves as a coordination point for Zn(2+). Glu-387 is a catalytic residue. Residues His-390 and His-393 each contribute to the Zn(2+) site.

The protein belongs to the peptidase M3B family. The cofactor is Zn(2+).

The protein resides in the cytoplasm. Functionally, has oligopeptidase activity and degrades a variety of small bioactive peptides, including bradykinin, neurotensin, and peptide fragments of substance P and adrenocorticotropin. Also hydrolyzes the synthetic collagen-like substrate N-(3-[2-furyl]acryloyl)-Leu-Gly-Pro-Ala (FALGPA). This Streptococcus agalactiae serotype III (strain NEM316) protein is Group B oligopeptidase PepB (pepB).